Reading from the N-terminus, the 110-residue chain is Nucleoid-associated protein YpAngola_A2890 (110 aa).

A disordered region spans residues 90–110; that stretch reads KEKMASVSNGMQLPPGFKMPF.

It belongs to the YbaB/EbfC family. In terms of assembly, homodimer.

Its subcellular location is the cytoplasm. The protein localises to the nucleoid. In terms of biological role, binds to DNA and alters its conformation. May be involved in regulation of gene expression, nucleoid organization and DNA protection. The chain is Nucleoid-associated protein YpAngola_A2890 from Yersinia pestis bv. Antiqua (strain Angola).